Here is a 306-residue protein sequence, read N- to C-terminus: MELKDYYAIMGVKPTDDLKTIKTAYRRLARKYHPDVSKEPDAEARFKEVAEAWEVLSDEQRRAEYDQMWQHRNDPQFNRQFHHGDGQSFNAEDFDDIFSSIFGQHARQSRQRPAARGHDIEIEVAVFLEETLTEHKRTISYNLPVYNAFGMIEQEIPKTLNVKIPAGVGNGQRIRLKGQGTPDENGGPNGDLWLVIHIAPHPLFDIVGQDLEIVVPVSPWEAALGAKVTVPTLKESILLTIPPGSQAGQRLRVKGKGLVSKKQTGDLYAVLKIVMPPKPDENTAALWQQLADAQSSFDPRKDWGKA.

A J domain is found at 5–69 (DYYAIMGVKP…QRRAEYDQMW (65 aa)).

The protein resides in the cytoplasm. It localises to the nucleoid. Its function is as follows. DNA-binding protein that preferentially recognizes a curved DNA sequence. It is probably a functional analog of DnaJ; displays overlapping activities with DnaJ, but functions under different conditions, probably acting as a molecular chaperone in an adaptive response to environmental stresses other than heat shock. Lacks autonomous chaperone activity; binds native substrates and targets them for recognition by DnaK. Its activity is inhibited by the binding of CbpM. The chain is Curved DNA-binding protein from Shigella boydii serotype 18 (strain CDC 3083-94 / BS512).